A 289-amino-acid polypeptide reads, in one-letter code: ATP synthase mitochondrial F1 complex assembly factor 2 (289 aa).

A mitochondrion-targeting transit peptide spans 1 to 40 (MWRSCLRLRDGGRRLLNRPAGGPSASMSPGPTIPSPARAY). The tract at residues 13–40 (RRLLNRPAGGPSASMSPGPTIPSPARAY) is disordered. Lysine 133 carries the post-translational modification N6-succinyllysine.

Belongs to the ATP12 family. As to quaternary structure, interacts with ATP5F1B; involved in the assembly of the F1 component of the mitochondrial ATP synthase (ATPase). Interacts with FMC1. In terms of tissue distribution, widely expressed.

Its subcellular location is the mitochondrion inner membrane. In terms of biological role, plays a role in the assembly of the F1 component of the mitochondrial ATP synthase (ATPase). This Homo sapiens (Human) protein is ATP synthase mitochondrial F1 complex assembly factor 2.